We begin with the raw amino-acid sequence, 364 residues long: Methylthioribose-1-phosphate isomerase (364 aa).

Residues Arg53–Ala55, Arg90, and Gln200 contribute to the substrate site. Asp241 (proton donor) is an active-site residue. Asn251–Lys252 contributes to the substrate binding site.

This sequence belongs to the eIF-2B alpha/beta/delta subunits family. MtnA subfamily.

The enzyme catalyses 5-(methylsulfanyl)-alpha-D-ribose 1-phosphate = 5-(methylsulfanyl)-D-ribulose 1-phosphate. Its pathway is amino-acid biosynthesis; L-methionine biosynthesis via salvage pathway; L-methionine from S-methyl-5-thio-alpha-D-ribose 1-phosphate: step 1/6. Its function is as follows. Catalyzes the interconversion of methylthioribose-1-phosphate (MTR-1-P) into methylthioribulose-1-phosphate (MTRu-1-P). The polypeptide is Methylthioribose-1-phosphate isomerase (Methylobacterium nodulans (strain LMG 21967 / CNCM I-2342 / ORS 2060)).